The chain runs to 393 residues: Acyl-homoserine-lactone synthase OpaM (393 aa).

It belongs to the LuxM / VanM family.

The catalysed reaction is a fatty acyl-[ACP] + S-adenosyl-L-methionine = an N-acyl-L-homoserine lactone + S-methyl-5'-thioadenosine + holo-[ACP] + H(+). This chain is Acyl-homoserine-lactone synthase OpaM (opaM), found in Vibrio parahaemolyticus serotype O3:K6 (strain RIMD 2210633).